The chain runs to 125 residues: Ribonuclease P protein component (125 aa).

Belongs to the RnpA family. Consists of a catalytic RNA component (M1 or rnpB) and a protein subunit.

The enzyme catalyses Endonucleolytic cleavage of RNA, removing 5'-extranucleotides from tRNA precursor.. In terms of biological role, RNaseP catalyzes the removal of the 5'-leader sequence from pre-tRNA to produce the mature 5'-terminus. It can also cleave other RNA substrates such as 4.5S RNA. The protein component plays an auxiliary but essential role in vivo by binding to the 5'-leader sequence and broadening the substrate specificity of the ribozyme. The sequence is that of Ribonuclease P protein component from Oleidesulfovibrio alaskensis (strain ATCC BAA-1058 / DSM 17464 / G20) (Desulfovibrio alaskensis).